The sequence spans 381 residues: Transaldolase 1 (381 aa).

Lys-149 acts as the Schiff-base intermediate with substrate in catalysis.

The protein belongs to the transaldolase family. Type 2 subfamily.

The protein resides in the cytoplasm. It catalyses the reaction D-sedoheptulose 7-phosphate + D-glyceraldehyde 3-phosphate = D-erythrose 4-phosphate + beta-D-fructose 6-phosphate. Its pathway is carbohydrate degradation; pentose phosphate pathway; D-glyceraldehyde 3-phosphate and beta-D-fructose 6-phosphate from D-ribose 5-phosphate and D-xylulose 5-phosphate (non-oxidative stage): step 2/3. In terms of biological role, transaldolase is important for the balance of metabolites in the pentose-phosphate pathway. The chain is Transaldolase 1 (tal1) from Streptomyces coelicolor (strain ATCC BAA-471 / A3(2) / M145).